A 3214-amino-acid chain; its full sequence is Ciliogenesis and planar polarity effector 1 (3214 aa).

The next 2 membrane-spanning stretches (helical) occupy residues 593–613 (KLML…LQFI) and 632–652 (AWVL…YWDM). 11 disordered regions span residues 1496 to 1523 (VGKK…ETPG), 1644 to 1667 (GNQS…PLQS), 1879 to 1991 (DGRH…HRAQ), 2047 to 2142 (FGES…FPPA), 2214 to 2241 (SLSD…SSHC), 2398 to 2440 (GITQ…ISND), 2491 to 2529 (GSHD…GHEP), 2622 to 2650 (TFQS…QSGE), 2824 to 2855 (VSLQ…HSSQ), 3037 to 3127 (TAPA…CRED), and 3158 to 3181 (MSPA…VSES). Positions 1512 to 1523 (NSQRKEDDETPG) are enriched in basic and acidic residues. A compositionally biased stretch (basic and acidic residues) spans 1932–1942 (QCSRKEPRDAS). 3 stretches are compositionally biased toward polar residues: residues 1943–1953 (VDTNLTEQKGA), 1971–1984 (NGAQ…QKTQ), and 2047–2068 (FGES…SRQR). Positions 2079 to 2099 (CTREPGKNSPADHKRISRPDQ) are enriched in basic and acidic residues. The segment covering 2215–2241 (LSDSCQPPVSQRTVHTTLPSPSDSSHC) has biased composition (polar residues). Over residues 2500 to 2514 (DPDKEGPSQKADSES) the composition is skewed to basic and acidic residues. 2 stretches are compositionally biased toward polar residues: residues 2515–2524 (SKNPQATAAS) and 2622–2634 (TFQS…STRG). Residues 2830–2848 (EDVEEQKDAEETSETEFSE) show a composition bias toward acidic residues. Over residues 3090–3107 (RGSSQLRGSQPPCQSQKP) the composition is skewed to polar residues.

As to quaternary structure, interacts with FUZ; INTU and WDPCP; the interactors are proposed to form the core CPLANE (ciliogenesis and planar polarity effectors) complex.

The protein localises to the membrane. Its subcellular location is the cell projection. It localises to the cilium. Functionally, involved in ciliogenesis. Involved in the establishment of cell polarity required for directional cell migration. Proposed to act in association with the CPLANE (ciliogenesis and planar polarity effectors) complex. Involved in recruitment of peripheral IFT-A proteins to basal bodies. The protein is Ciliogenesis and planar polarity effector 1 of Mus musculus (Mouse).